The chain runs to 447 residues: Exodeoxyribonuclease 7 large subunit (447 aa).

Belongs to the XseA family. As to quaternary structure, heterooligomer composed of large and small subunits.

It localises to the cytoplasm. It carries out the reaction Exonucleolytic cleavage in either 5'- to 3'- or 3'- to 5'-direction to yield nucleoside 5'-phosphates.. Functionally, bidirectionally degrades single-stranded DNA into large acid-insoluble oligonucleotides, which are then degraded further into small acid-soluble oligonucleotides. The polypeptide is Exodeoxyribonuclease 7 large subunit (Thioalkalivibrio sulfidiphilus (strain HL-EbGR7)).